The following is a 71-amino-acid chain: Disintegrin viridin (71 aa).

Residues 1–71 (AGEECDCGSP…SADCPRNRFH (71 aa)) form the Disintegrin domain. Cystine bridges form between Cys-5/Cys-20, Cys-7/Cys-15, Cys-14/Cys-37, Cys-28/Cys-34, Cys-33/Cys-58, and Cys-46/Cys-65. The Cell attachment site motif lies at 50-52 (RGD). The interval 50–71 (RGDNPDDRCTGQSADCPRNRFH) is disordered.

Belongs to the venom metalloproteinase (M12B) family. P-II subfamily. P-IIa sub-subfamily. Monomer (disintegrin). Expressed by the venom gland.

It localises to the secreted. Inhibits fibrinogen interaction with platelets. Acts by binding to alpha-IIb/beta-3 (ITGA2B/ITGB3) on the platelet surface and inhibits aggregation induced by ADP, thrombin, platelet-activating factor and collagen. The sequence is that of Disintegrin viridin from Crotalus viridis viridis (Prairie rattlesnake).